A 301-amino-acid polypeptide reads, in one-letter code: Nucleotide-binding protein MAB_2783c (301 aa).

An ATP-binding site is contributed by 24 to 31 (GLSGAGRG). Residue 75–78 (DVRS) participates in GTP binding.

Belongs to the RapZ-like family.

Displays ATPase and GTPase activities. The chain is Nucleotide-binding protein MAB_2783c from Mycobacteroides abscessus (strain ATCC 19977 / DSM 44196 / CCUG 20993 / CIP 104536 / JCM 13569 / NCTC 13031 / TMC 1543 / L948) (Mycobacterium abscessus).